Reading from the N-terminus, the 155-residue chain is Transcription antitermination protein NusB (155 aa).

The protein belongs to the NusB family.

Its function is as follows. Involved in transcription antitermination. Required for transcription of ribosomal RNA (rRNA) genes. Binds specifically to the boxA antiterminator sequence of the ribosomal RNA (rrn) operons. This is Transcription antitermination protein NusB from Mesorhizobium japonicum (strain LMG 29417 / CECT 9101 / MAFF 303099) (Mesorhizobium loti (strain MAFF 303099)).